Consider the following 935-residue polypeptide: C-1-tetrahydrofolate synthase, cytoplasmic (935 aa).

Methionine 1 is subject to N-acetylmethionine. The methylenetetrahydrofolate dehydrogenase and methenyltetrahydrofolate cyclohydrolase (D/C) domain stretch occupies residues 2 to 291 (APAGILNGKL…MLMQSTVESA (290 aa)). Residues 52–56 (YINVK) and 99–101 (VQL) each bind substrate. Lysine 56 is an active-site residue. NADP(+) contacts are provided by residues 172 to 174 (GRS) and serine 197. 272–276 (PGGVG) provides a ligand contact to substrate. The interval 310–935 (LNLKTPVPSD…PETEQVNGLF (626 aa)) is formyltetrahydrofolate synthetase domain. Serine 318 carries the phosphoserine modification. Position 380–387 (380–387 (TPLGEGKS)) interacts with ATP. 2 positions are modified to phosphoserine: serine 413 and serine 490.

It in the N-terminal section; belongs to the tetrahydrofolate dehydrogenase/cyclohydrolase family. This sequence in the C-terminal section; belongs to the formate--tetrahydrofolate ligase family. In terms of assembly, homodimer.

It localises to the cytoplasm. It carries out the reaction (6R)-5,10-methylene-5,6,7,8-tetrahydrofolate + NADP(+) = (6R)-5,10-methenyltetrahydrofolate + NADPH. The catalysed reaction is (6R)-5,10-methenyltetrahydrofolate + H2O = (6R)-10-formyltetrahydrofolate + H(+). It catalyses the reaction (6S)-5,6,7,8-tetrahydrofolate + formate + ATP = (6R)-10-formyltetrahydrofolate + ADP + phosphate. Its pathway is one-carbon metabolism; tetrahydrofolate interconversion. In terms of biological role, trifunctional enzyme that catalyzes the interconversion of three forms of one-carbon-substituted tetrahydrofolate: (6R)-5,10-methylene-5,6,7,8-tetrahydrofolate, 5,10-methenyltetrahydrofolate and (6S)-10-formyltetrahydrofolate. These derivatives of tetrahydrofolate are differentially required in nucleotide and amino acid biosynthesis, (6S)-10-formyltetrahydrofolate being required for purine biosynthesis while (6R)-5,10-methylene-5,6,7,8-tetrahydrofolate is used for serine and methionine biosynthesis for instance. This is C-1-tetrahydrofolate synthase, cytoplasmic (Mthfd1) from Mus musculus (Mouse).